Reading from the N-terminus, the 546-residue chain is Chaperonin GroEL (546 aa).

ATP-binding positions include 30–33, Lys-51, 87–91, Gly-415, and Asp-495; these read TLGP and DGTTT.

It belongs to the chaperonin (HSP60) family. Forms a cylinder of 14 subunits composed of two heptameric rings stacked back-to-back. Interacts with the co-chaperonin GroES.

It localises to the cytoplasm. It catalyses the reaction ATP + H2O + a folded polypeptide = ADP + phosphate + an unfolded polypeptide.. Functionally, together with its co-chaperonin GroES, plays an essential role in assisting protein folding. The GroEL-GroES system forms a nano-cage that allows encapsulation of the non-native substrate proteins and provides a physical environment optimized to promote and accelerate protein folding. The sequence is that of Chaperonin GroEL from Brucella anthropi (strain ATCC 49188 / DSM 6882 / CCUG 24695 / JCM 21032 / LMG 3331 / NBRC 15819 / NCTC 12168 / Alc 37) (Ochrobactrum anthropi).